Here is a 467-residue protein sequence, read N- to C-terminus: Ethanolamine-phosphate phospho-lyase homolog 1 (467 aa).

K307 carries the N6-(pyridoxal phosphate)lysine modification.

The protein belongs to the class-III pyridoxal-phosphate-dependent aminotransferase family. It depends on pyridoxal 5'-phosphate as a cofactor.

This chain is Ethanolamine-phosphate phospho-lyase homolog 1, found in Caenorhabditis elegans.